Reading from the N-terminus, the 150-residue chain is Urease accessory protein UreE (150 aa).

The protein belongs to the UreE family.

The protein resides in the cytoplasm. Involved in urease metallocenter assembly. Binds nickel. Probably functions as a nickel donor during metallocenter assembly. The sequence is that of Urease accessory protein UreE from Staphylococcus aureus (strain Mu3 / ATCC 700698).